Here is a 415-residue protein sequence, read N- to C-terminus: 6-phospho-beta-glucosidase BglT (415 aa).

Residue 1–64 (MRIAVIGGGS…DRFKVLISDT (64 aa)) coordinates NAD(+). Positions 87 and 140 each coordinate substrate. Residue Cys-162 coordinates Mn(2+). Asn-163 is a substrate binding site. Mn(2+) is bound at residue His-192. The active-site Proton acceptor is Tyr-241. Position 261 (Arg-261) interacts with substrate.

This sequence belongs to the glycosyl hydrolase 4 family. Homodimer or homotetramer. Exists in a homodimer/homotetramer equilibrium state in solution. Requires NAD(+) as cofactor. It depends on Mn(2+) as a cofactor.

It carries out the reaction 6-phospho-beta-D-glucosyl-(1-&gt;4)-D-glucose + H2O = D-glucose 6-phosphate + D-glucose. Functionally, hydrolyzes cellobiose 6'-phosphate into glucose 6-phosphate (Glc6P) and glucose. The chain is 6-phospho-beta-glucosidase BglT (bglT) from Thermotoga maritima (strain ATCC 43589 / DSM 3109 / JCM 10099 / NBRC 100826 / MSB8).